The following is a 561-amino-acid chain: DNA ligase B (561 aa).

K125 functions as the N6-AMP-lysine intermediate in the catalytic mechanism.

This sequence belongs to the NAD-dependent DNA ligase family. LigB subfamily.

The enzyme catalyses NAD(+) + (deoxyribonucleotide)n-3'-hydroxyl + 5'-phospho-(deoxyribonucleotide)m = (deoxyribonucleotide)n+m + AMP + beta-nicotinamide D-nucleotide.. Its function is as follows. Catalyzes the formation of phosphodiester linkages between 5'-phosphoryl and 3'-hydroxyl groups in double-stranded DNA using NAD as a coenzyme and as the energy source for the reaction. The chain is DNA ligase B from Salmonella arizonae (strain ATCC BAA-731 / CDC346-86 / RSK2980).